A 572-amino-acid chain; its full sequence is Hemagglutinin-neuraminidase (572 aa).

Residues 1-31 (MEYWKHTNHGKDACNELGTSMATHGNKITNK) lie on the Intravirion side of the membrane. A helical transmembrane segment spans residues 32–52 (ITYILWTIILVLLSIIFIIVL). At 53 to 572 (INSIKSEKAH…FKTEIPKSCS (520 aa)) the chain is on the virion surface side. Cystine bridges form between C190/C214 and C256/C269. Residues 252 to 257 (NRKSCS) form an involved in neuraminidase activity region. 2 N-linked (GlcNAc...) asparagine; by host glycosylation sites follow: N308 and N351. Cystine bridges form between C355–C469 and C463–C473. A glycan (N-linked (GlcNAc...) asparagine; by host) is linked at N523. Residues C535 and C544 are joined by a disulfide bond.

Belongs to the paramyxoviruses hemagglutinin-neuraminidase family. In terms of assembly, homotetramer; composed of disulfide-linked homodimers. Interacts with F protein trimer.

The protein resides in the virion membrane. Its subcellular location is the host cell membrane. The catalysed reaction is Hydrolysis of alpha-(2-&gt;3)-, alpha-(2-&gt;6)-, alpha-(2-&gt;8)- glycosidic linkages of terminal sialic acid residues in oligosaccharides, glycoproteins, glycolipids, colominic acid and synthetic substrates.. In terms of biological role, attaches the virus to sialic acid-containing cell receptors and thereby initiating infection. Binding of HN protein to the receptor induces a conformational change that allows the F protein to trigger virion/cell membranes fusion. Functionally, neuraminidase activity ensures the efficient spread of the virus by dissociating the mature virions from the neuraminic acid containing glycoproteins. The polypeptide is Hemagglutinin-neuraminidase (HN) (Homo sapiens (Human)).